The primary structure comprises 397 residues: Lipoyl synthase 2, chloroplastic (397 aa).

Residues 1-35 constitute a chloroplast transit peptide; the sequence is MIEQSLSKPSFSLSIPIPKAPKSKSSFFCSYSKIR. The segment at 49-85 is disordered; sequence AKHPQNSTTINNGSSSSASVDLKNNEKGPYPYPGGGK. The span at 54–67 shows a compositional bias: low complexity; that stretch reads NSTTINNGSSSSAS. 7 residues coordinate [4Fe-4S] cluster: C128, C133, C139, C159, C163, C166, and S374. Residues 142 to 363 form the Radical SAM core domain; that stretch reads GGGDGIATAT…KEYGESIGFR (222 aa).

It belongs to the radical SAM superfamily. Lipoyl synthase family. [4Fe-4S] cluster serves as cofactor.

Its subcellular location is the plastid. The protein localises to the chloroplast. The catalysed reaction is [[Fe-S] cluster scaffold protein carrying a second [4Fe-4S](2+) cluster] + N(6)-octanoyl-L-lysyl-[protein] + 2 oxidized [2Fe-2S]-[ferredoxin] + 2 S-adenosyl-L-methionine + 4 H(+) = [[Fe-S] cluster scaffold protein] + N(6)-[(R)-dihydrolipoyl]-L-lysyl-[protein] + 4 Fe(3+) + 2 hydrogen sulfide + 2 5'-deoxyadenosine + 2 L-methionine + 2 reduced [2Fe-2S]-[ferredoxin]. The protein operates within protein modification; protein lipoylation via endogenous pathway; protein N(6)-(lipoyl)lysine from octanoyl-[acyl-carrier-protein]: step 2/2. Functionally, catalyzes the radical-mediated insertion of two sulfur atoms into the C-6 and C-8 positions of the octanoyl moiety bound to the lipoyl domains of lipoate-dependent enzymes, thereby converting the octanoylated domains into lipoylated derivatives. The sequence is that of Lipoyl synthase 2, chloroplastic from Populus trichocarpa (Western balsam poplar).